We begin with the raw amino-acid sequence, 674 residues long: Translation initiation factor IF-2 (674 aa).

In terms of domain architecture, tr-type G spans 174–344; it reads IRPPVVTVMG…LLVAELREIK (171 aa). Residues 183–190 are G1; the sequence is GHVDHGKT. 183–190 is a GTP binding site; the sequence is GHVDHGKT. The interval 208-212 is G2; sequence GITQS. Residues 229–232 form a G3 region; that stretch reads DTPG. Residues 229–233 and 283–286 each bind GTP; these read DTPGH and NKID. The interval 283–286 is G4; that stretch reads NKID. Positions 320–322 are G5; sequence SAR.

Belongs to the TRAFAC class translation factor GTPase superfamily. Classic translation factor GTPase family. IF-2 subfamily.

The protein resides in the cytoplasm. Its function is as follows. One of the essential components for the initiation of protein synthesis. Protects formylmethionyl-tRNA from spontaneous hydrolysis and promotes its binding to the 30S ribosomal subunits. Also involved in the hydrolysis of GTP during the formation of the 70S ribosomal complex. This is Translation initiation factor IF-2 from Pseudothermotoga lettingae (strain ATCC BAA-301 / DSM 14385 / NBRC 107922 / TMO) (Thermotoga lettingae).